An 83-amino-acid polypeptide reads, in one-letter code: Cytochrome b559 subunit alpha (83 aa).

A helical membrane pass occupies residues 21 to 35 (VIHSITIPSLFIAGW). His-23 is a binding site for heme.

It belongs to the PsbE/PsbF family. Heterodimer of an alpha subunit and a beta subunit. PSII is composed of 1 copy each of membrane proteins PsbA, PsbB, PsbC, PsbD, PsbE, PsbF, PsbH, PsbI, PsbJ, PsbK, PsbL, PsbM, PsbT, PsbX, PsbY, PsbZ, Psb30/Ycf12, at least 3 peripheral proteins of the oxygen-evolving complex and a large number of cofactors. It forms dimeric complexes. The cofactor is heme b.

It localises to the plastid. The protein resides in the chloroplast thylakoid membrane. This b-type cytochrome is tightly associated with the reaction center of photosystem II (PSII). PSII is a light-driven water:plastoquinone oxidoreductase that uses light energy to abstract electrons from H(2)O, generating O(2) and a proton gradient subsequently used for ATP formation. It consists of a core antenna complex that captures photons, and an electron transfer chain that converts photonic excitation into a charge separation. The chain is Cytochrome b559 subunit alpha from Acorus calamus (Sweet flag).